Reading from the N-terminus, the 176-residue chain is Large ribosomal subunit protein uL6 (176 aa).

Belongs to the universal ribosomal protein uL6 family. As to quaternary structure, part of the 50S ribosomal subunit.

Its function is as follows. This protein binds to the 23S rRNA, and is important in its secondary structure. It is located near the subunit interface in the base of the L7/L12 stalk, and near the tRNA binding site of the peptidyltransferase center. This is Large ribosomal subunit protein uL6 from Methanothrix thermoacetophila (strain DSM 6194 / JCM 14653 / NBRC 101360 / PT) (Methanosaeta thermophila).